The sequence spans 395 residues: Lipid-A-disaccharide synthase (395 aa).

Belongs to the LpxB family.

The catalysed reaction is a lipid X + a UDP-2-N,3-O-bis[(3R)-3-hydroxyacyl]-alpha-D-glucosamine = a lipid A disaccharide + UDP + H(+). It functions in the pathway bacterial outer membrane biogenesis; LPS lipid A biosynthesis. Functionally, condensation of UDP-2,3-diacylglucosamine and 2,3-diacylglucosamine-1-phosphate to form lipid A disaccharide, a precursor of lipid A, a phosphorylated glycolipid that anchors the lipopolysaccharide to the outer membrane of the cell. This Bordetella avium (strain 197N) protein is Lipid-A-disaccharide synthase.